The following is a 514-amino-acid chain: 2,3-bisphosphoglycerate-independent phosphoglycerate mutase (514 aa).

Mn(2+) is bound by residues aspartate 14 and serine 64. The active-site Phosphoserine intermediate is the serine 64. Residues histidine 125, 155–156 (RD), arginine 187, arginine 193, 263–266 (RADR), and lysine 336 each bind substrate. Mn(2+)-binding residues include aspartate 403, histidine 407, aspartate 444, histidine 445, and histidine 463.

The protein belongs to the BPG-independent phosphoglycerate mutase family. In terms of assembly, monomer. It depends on Mn(2+) as a cofactor.

It carries out the reaction (2R)-2-phosphoglycerate = (2R)-3-phosphoglycerate. It participates in carbohydrate degradation; glycolysis; pyruvate from D-glyceraldehyde 3-phosphate: step 3/5. In terms of biological role, catalyzes the interconversion of 2-phosphoglycerate and 3-phosphoglycerate. The protein is 2,3-bisphosphoglycerate-independent phosphoglycerate mutase of Salmonella typhi.